A 1211-amino-acid polypeptide reads, in one-letter code: Periplasmic acid trehalase ATC1 (1211 aa).

Residues 1–46 are Cytoplasmic-facing; that stretch reads MKRIRSLWFNAEASYSNLNNSPSLRNKNSTGNNSRSKNYRSFSRFD. The chain crosses the membrane as a helical span at residues 47 to 67; the sequence is LINSILLLMMLFLLAIFVTAL. Residues 68-1211 lie on the Periplasmic side of the membrane; it reads YLTKSSRLTY…ATIKEIVLND (1144 aa). The tract at residues 70–131 is required for cell surface targeting; it reads TKSSRLTYSH…NTAYYDDENM (62 aa). 10 N-linked (GlcNAc...) asparagine glycosylation sites follow: asparagine 98, asparagine 207, asparagine 238, asparagine 247, asparagine 255, asparagine 259, asparagine 325, asparagine 370, asparagine 376, and asparagine 488. Residue 513–514 coordinates substrate; sequence WD. Asparagine 539, asparagine 568, asparagine 628, and asparagine 638 each carry an N-linked (GlcNAc...) asparagine glycan. Glutamate 644 functions as the Proton donor in the catalytic mechanism. Residues asparagine 696 and asparagine 705 are each glycosylated (N-linked (GlcNAc...) asparagine). Residue 711–712 coordinates substrate; it reads KQ. Asparagine 879, asparagine 897, asparagine 910, asparagine 972, asparagine 990, asparagine 1031, asparagine 1049, asparagine 1064, asparagine 1147, and asparagine 1157 each carry an N-linked (GlcNAc...) asparagine glycan.

Belongs to the glycosyl hydrolase 65 family. Glycosylated.

The protein localises to the membrane. It is found in the vacuole lumen. Its subcellular location is the periplasm. It catalyses the reaction alpha,alpha-trehalose + H2O = alpha-D-glucose + beta-D-glucose. Functionally, periplasmic acid trehalase that catalyzes hydrolysis of the disaccharide trehalose and required for growth on trehalose as carbon source. Growth on trehalose is strictly respiratory. The chain is Periplasmic acid trehalase ATC1 from Saccharomyces cerevisiae (strain CEN.PK113-7D) (Baker's yeast).